A 386-amino-acid polypeptide reads, in one-letter code: Glyceraldehyde-3-phosphate dehydrogenase, chloroplastic (386 aa).

A chloroplast-targeting transit peptide spans 1–45 (MAYFKAVAYLAALASAAAFNPGSSFVPRLNAPATQPKAAKMTGPT). NADP(+)-binding positions include 58–59 (RI) and arginine 125. Residues 197 to 199 (SCT), threonine 228, 257 to 258 (TG), and arginine 280 each bind D-glyceraldehyde 3-phosphate. The Nucleophile role is filled by cysteine 198. Position 362 (asparagine 362) interacts with NADP(+).

This sequence belongs to the glyceraldehyde-3-phosphate dehydrogenase family. As to quaternary structure, homotetramer.

It is found in the plastid. The protein resides in the chloroplast. The catalysed reaction is D-glyceraldehyde 3-phosphate + phosphate + NADP(+) = (2R)-3-phospho-glyceroyl phosphate + NADPH + H(+). It catalyses the reaction D-glyceraldehyde 3-phosphate + phosphate + NAD(+) = (2R)-3-phospho-glyceroyl phosphate + NADH + H(+). Its pathway is carbohydrate biosynthesis; Calvin cycle. The chain is Glyceraldehyde-3-phosphate dehydrogenase, chloroplastic (GAPC1) from Guillardia theta (Cryptophyte).